The chain runs to 393 residues: Na(+)/H(+) antiporter NhaA 1 (393 aa).

Helical transmembrane passes span 23-43, 58-78, 96-116, 126-146, 155-175, 178-198, 224-244, 265-285, 298-318, 334-354, and 367-387; these read AGGVSLMVAAALALIVANSPF, LSLTDWINDALMAVFFLLVGL, MLPGIAAAGGVILPAIIFTAF, GWAVPSATDIAFALGVLSLLG, VFLATLAILDDLAAVVIIAIF, AEISMPYLGGAFAAAIVLFVM, GVHATVAGVVTALMIPLKAAP, VAFIIVPIFGFANAGISFAGL, IMLGLFIGKQLGVFGAAWLAI, LYGVAVLCGIGFTMSIFIGLL, and IGVLAGSGLSAICGYILLRLV.

It belongs to the NhaA Na(+)/H(+) (TC 2.A.33) antiporter family.

Its subcellular location is the cell inner membrane. The catalysed reaction is Na(+)(in) + 2 H(+)(out) = Na(+)(out) + 2 H(+)(in). In terms of biological role, na(+)/H(+) antiporter that extrudes sodium in exchange for external protons. The protein is Na(+)/H(+) antiporter NhaA 1 of Brucella anthropi (strain ATCC 49188 / DSM 6882 / CCUG 24695 / JCM 21032 / LMG 3331 / NBRC 15819 / NCTC 12168 / Alc 37) (Ochrobactrum anthropi).